The sequence spans 212 residues: Suppressor of cytokine signaling 1 (212 aa).

Positions 1–55 (MVARNQVAADNAISPAAEPRRRSEPSSSSSSSSPAAPVRPRPCPAVPAPAPGDTH) are disordered. Over residues 25–36 (PSSSSSSSSPAA) the composition is skewed to low complexity. Residues 37–50 (PVRPRPCPAVPAPA) show a composition bias toward pro residues. The segment at 56 to 67 (FRTFRSHSDYRR) is kinase inhibitory region (KIR). Residues 68 to 79 (ITRTSALLDACG) form an extended SH2 subdomain (ESS) region. The SH2 domain maps to 80–175 (FYWGPLSVHG…PLRQRRVRPL (96 aa)). The SOCS box domain maps to 162-211 (MLGAPLRQRRVRPLQELCRQRIVAAVGRENLARIPLNPVLRDYLSSFPFQ). The segment at 174–183 (PLQELCRQRI) is interaction with Elongin BC complex.

It belongs to the SOCS1 family. Interacts with multiple activated proteins of the tyrosine kinase signaling pathway including JAK family kinases, TEC, KIT, GRB2 and VAV. Binding to JAKs is mediated through the KIR and SH2 domain to a phosphorylated tyrosine residue within the JAK JH1 domain. Binds the SH3 domain of GRB2 via diproline determinants in the N-terminus, and the N-terminal regulatory domain of VAV. Interacts with the Elongin BC complex (ELOB and ELOC). Component of an ECS CBC(SOCS1) E3 ubiquitin-protein ligase complex which contains Elongin BC, CUL5, RBX1 and SOCS1. Interacts (via SH2 domain and SOCS box) with TRIM8. Interacts with CUL2. Interacts with AXL and FGFR3. Interacts with INSR. Interacts with TRIM8. Interacts with DCUN1D1. Interacts with IFNGR1. High expression in thymus. Lower expression in lung and spleen. Expressed in both Th1 and Th2 cells.

The protein resides in the nucleus. Its subcellular location is the cytoplasmic vesicle. Its pathway is protein modification; protein ubiquitination. In terms of biological role, essential negative regulator of type I and type II interferon (IFN) signaling, as well as that of other cytokines, including IL2, IL4, IL6 and leukemia inhibitory factor (LIF). Downregulates cytokine signaling by inhibiting the JAK/STAT signaling pathway. Acts by binding to JAK proteins and to IFNGR1 and inhibiting their kinase activity. In vitro, suppresses Tec protein-tyrosine activity. Regulates IFN-gamma (IFNG)-mediated sensory neuron survival. Probable substrate recognition component of an ECS (Elongin BC-CUL2/5-SOCS-box protein) E3 ubiquitin ligase complex which mediates the ubiquitination and subsequent proteasomal degradation of target proteins. This Mus musculus (Mouse) protein is Suppressor of cytokine signaling 1.